The chain runs to 170 residues: Non-specific lipid transfer protein GPI-anchored 5 (170 aa).

An N-terminal signal peptide occupies residues 1–24 (MKMEMGLVFLTVFMAVMSSTMVSA). Disulfide bonds link Cys-28-Cys-69, Cys-38-Cys-53, Cys-54-Cys-95, and Cys-67-Cys-105. Residues Asn-45, Asn-84, Asn-124, and Asn-130 are each glycosylated (N-linked (GlcNAc...) asparagine). Positions 105-148 (CNTGGGGGGSTSDSPAESPNSSGPGNGSKTVPVGEGDGPPSSDG) are disordered. Ser-146 carries the GPI-anchor amidated serine lipid modification. A propeptide spans 147–170 (DGSSIKFSFPLIAFFSAVSYMAIF) (removed in mature form).

The protein belongs to the plant LTP family. Expressed in seedlings, preferentially in the endodermis of hypocotyls and roots, as well as in anthers, sepals and flower tori.

The protein localises to the cell membrane. In terms of biological role, lipid transfer protein involved in seed and ovule maturation and development, probably by regulating the fatty acids homeostasis during suberin and sporopollenin biosynthesis or deposition. Contributes to pre-invasive defense against some non-host powdery mildew pathogens by preventing the penetration of the epidermal cell wall by the fungal agents (e.g. Blumeria graminis f. sp. hordei (Bgh)). This is Non-specific lipid transfer protein GPI-anchored 5 from Arabidopsis thaliana (Mouse-ear cress).